The chain runs to 709 residues: MLNPIVRKFQYGQHTVTIETGMMARQATAAVMVNMDDTAVFVTVVGQKKVKAGQDFFPLTVNYQERTYAAGRIPGSFFRREGRPGEGETLVARLIDRPLRPLFPEGFLNEVRIVATVVSVNPQINPDIVAMIGASAALALSGIPFNGPIGAARVGYINDQYVLNPTSDELKNSRLDLVVSGTAGAVLMVESEADLLTEEQMLGAVVFGHDQQQVVIDNINALAAEAGKEKWDWVPEPVNQALHDRVAELAESRLGDAYRITEKQERYAQVDAIKDEVTAALLEQDETLEEAEIHEILGSLEKNVVRSRVLSGEPRIDGREKDMVRALDVRTGVLPRTHGSALFTRGETQALVTATLGTERDAQIIDELMGERTDRFLLHYNFPPYSVGETGMMGSPKRREIGHGRLAKRGVLAVMPKANEFPYTVRVVSEITESNGSSSMASVCGASLALMDAGVPIKAAVAGIAMGLVKEGDNFVVLSDILGDEDHLGDMDFKVAGSCEGISALQMDIKIEGITREIMQVALNQAKGARLHILSVMEQAITTPRDDISQFAPRIHTIKINPDKIKDVIGKGGSVIRALTEETGTTIEIEDDGTVKIAATDGEKAKHAISRIEEITAEIEVGRIYAGKVTRIVDFGAFVAIGGGKEGLVHISQIADKRVEKVADYLQVGQETSVKVLEIDRQGRVRLSIKEATAGTAVEEAPPAPQSAE.

Mg(2+) contacts are provided by aspartate 486 and aspartate 492. The region spanning 553-612 (PRIHTIKINPDKIKDVIGKGGSVIRALTEETGTTIEIEDDGTVKIAATDGEKAKHAISRI) is the KH domain. Residues 622–690 (GRIYAGKVTR…RQGRVRLSIK (69 aa)) enclose the S1 motif domain.

The protein belongs to the polyribonucleotide nucleotidyltransferase family. As to quaternary structure, component of the RNA degradosome, which is a multiprotein complex involved in RNA processing and mRNA degradation. The cofactor is Mg(2+).

It localises to the cytoplasm. It catalyses the reaction RNA(n+1) + phosphate = RNA(n) + a ribonucleoside 5'-diphosphate. Functionally, involved in mRNA degradation. Catalyzes the phosphorolysis of single-stranded polyribonucleotides processively in the 3'- to 5'-direction. In Photorhabdus luminescens (Xenorhabdus luminescens), this protein is Polyribonucleotide nucleotidyltransferase.